The following is a 583-amino-acid chain: Ankyrin repeat-containing protein NPR4 (583 aa).

ANK repeat units lie at residues 68–97 (HNDTDLHVAARGGDAGALRRALDEAAAAVA), 119–148 (AGETPLVAAAERGHLEVVRELLRHLDAEGV), 154–183 (SGYDALHVAAREGRHAVVQEMLLHNRLLAK), 188–218 (ANTSPLISAATRGHTEVVKLLLELDDFGLVE), 223–252 (NGKNSLHFAARQGHVEIVKALLEKDPQLAR), 257–286 (KGQTALHMAVKGTNCDVLRALVDADPAIVM), and 291–321 (NGNTALHVATRKKRAEIVAVLLRLPDTHVNA). 4 helical membrane-spanning segments follow: residues 414–434 (VTVVAVLFATVAFAAIFTVPG), 452–472 (IFFIFNAIALFTSLAVVVVQI), 492–512 (LMWLASVCTTISFIASCYIVL), and 518–538 (WAALLVSLIGGITMAGVLGTM).

The protein localises to the cell membrane. Functionally, involved in salt stress tolerance. The polypeptide is Ankyrin repeat-containing protein NPR4 (Oryza sativa subsp. japonica (Rice)).